Consider the following 165-residue polypeptide: Peptide methionine sulfoxide reductase MsrA (165 aa).

C10 is a catalytic residue.

This sequence belongs to the MsrA Met sulfoxide reductase family.

The catalysed reaction is L-methionyl-[protein] + [thioredoxin]-disulfide + H2O = L-methionyl-(S)-S-oxide-[protein] + [thioredoxin]-dithiol. It carries out the reaction [thioredoxin]-disulfide + L-methionine + H2O = L-methionine (S)-S-oxide + [thioredoxin]-dithiol. Functionally, has an important function as a repair enzyme for proteins that have been inactivated by oxidation. Catalyzes the reversible oxidation-reduction of methionine sulfoxide in proteins to methionine. This chain is Peptide methionine sulfoxide reductase MsrA, found in Campylobacter jejuni subsp. jejuni serotype O:6 (strain 81116 / NCTC 11828).